A 193-amino-acid polypeptide reads, in one-letter code: dITP/XTP pyrophosphatase (193 aa).

Position 7–12 (7–12 (SENENK)) interacts with substrate. D65 (proton acceptor) is an active-site residue. A Mg(2+)-binding site is contributed by D65. Substrate is bound by residues S66, 144-147 (FGYD), K167, and 172-173 (HR).

This sequence belongs to the HAM1 NTPase family. In terms of assembly, homodimer. The cofactor is Mg(2+).

It catalyses the reaction XTP + H2O = XMP + diphosphate + H(+). The enzyme catalyses dITP + H2O = dIMP + diphosphate + H(+). It carries out the reaction ITP + H2O = IMP + diphosphate + H(+). Pyrophosphatase that catalyzes the hydrolysis of nucleoside triphosphates to their monophosphate derivatives, with a high preference for the non-canonical purine nucleotides XTP (xanthosine triphosphate), dITP (deoxyinosine triphosphate) and ITP. Seems to function as a house-cleaning enzyme that removes non-canonical purine nucleotides from the nucleotide pool, thus preventing their incorporation into DNA/RNA and avoiding chromosomal lesions. This Tropheryma whipplei (strain Twist) (Whipple's bacillus) protein is dITP/XTP pyrophosphatase.